Here is a 709-residue protein sequence, read N- to C-terminus: Anillin-like protein 3 (709 aa).

One can recognise a PH domain in the interval 584-705 (DMEYRGFLHI…WLSAINDTLD (122 aa)).

The chain is Anillin-like protein 3 (ani-3) from Caenorhabditis elegans.